Reading from the N-terminus, the 446-residue chain is Ubiquitin carboxyl-terminal hydrolase MINDY-3 (446 aa).

The Nucleophile role is filled by C51. Residues 117 to 128 (DNSDITDSHPEP) show a composition bias toward basic and acidic residues. Residues 117–137 (DNSDITDSHPEPESSQPTDTP) form a disordered region. H288 functions as the Proton acceptor in the catalytic mechanism.

Belongs to the MINDY deubiquitinase family. FAM188 subfamily.

The protein localises to the nucleus. It carries out the reaction Thiol-dependent hydrolysis of ester, thioester, amide, peptide and isopeptide bonds formed by the C-terminal Gly of ubiquitin (a 76-residue protein attached to proteins as an intracellular targeting signal).. Functionally, hydrolase that can remove 'Lys-48'-linked conjugated ubiquitin from proteins. The protein is Ubiquitin carboxyl-terminal hydrolase MINDY-3 (mindy3) of Danio rerio (Zebrafish).